A 313-amino-acid polypeptide reads, in one-letter code: Leucine zipper protein 4 (313 aa).

Positions 1-119 (MASFRKLTLS…PLIEQEKCSD (119 aa)) are interaction with DDX39B/UAP56. Disordered regions lie at residues 1 to 238 (MASF…QGDL) and 290 to 313 (QSGRSHGQSERHQRYSTGKNTITT). Residues 22 to 40 (KVNFLDMSLDDIIIYKELE) carry the UAP56-binding motif (UBM); required for proper nuclear localization motif. Basic and acidic residues predominate over residues 34-60 (IIYKELEGTNAEEEKNKRQNHSKKESP). Residues 51 to 80 (RQNHSKKESPSRQQSKAHRHRHRRGYSRCR) form an arg-rich; required for RNA-binding region. Over residues 65 to 77 (SKAHRHRHRRGYS) the composition is skewed to basic residues. The span at 81-92 (SNSEEGNHDKKP) shows a compositional bias: basic and acidic residues. Residues 126 to 141 (EKNQGQSEGNQHQSEG) are compositionally biased toward polar residues. Residues 142-168 (NPDKSEESQGQPEENHHSERSRNHLER) show a composition bias toward basic and acidic residues. Residues 169-179 (SLSQSDRSQGQ) are compositionally biased toward polar residues. The RS-containing His-rich (RS-H); necessary for nuclear localization stretch occupies residues 178–236 (GQLKRHHPQYERSHGQYKRSHGQSERSHGHSERSHGHSERSHGHSERSHGHSKRSRSQG). The segment covering 199-226 (GQSERSHGHSERSHGHSERSHGHSERSH) has biased composition (basic and acidic residues). At Ser234 the chain carries Phosphoserine. The tract at residues 238 to 287 (LVDTQSDLIATQRDLIATQKDLIATQRDLIATQRDLIVTQRDLVATERDL) is leucine-zipper; required for RNA-binding and for its relocalization to the cytoplasm during cell division. Positions 241 to 313 (TQSDLIATQR…YSTGKNTITT (73 aa)) are interaction with NXF1. Residues 304–313 (YSTGKNTITT) are compositionally biased toward polar residues.

In terms of assembly, interacts with NXF1, NXF2, THOC1, THOC5, DDX39B/UAP56 and SRRT. Expressed specifically in testis. Also expressed in a wide variety of cancer types, but particularly high levels of expression observed in melanoma cells.

It is found in the nucleus. It localises to the cytoplasm. In terms of biological role, export adapter involved in mRNA nuclear export in cancer cells. Binds and enhances the RNA-binding activity of the nuclear RNA export factor NXF1. Can restore mRNA export function in cells compromised by loss of mRNA export adapters. In Homo sapiens (Human), this protein is Leucine zipper protein 4 (LUZP4).